The sequence spans 241 residues: Proteasome subunit beta type-1 (241 aa).

Methionine 1 is modified (N-acetylmethionine). A propeptide spanning residues 1-28 (MLSSTAMYSAPGRDLGMEPHRAAGPLQL) is cleaved from the precursor. Serine 58 carries O-linked (GlcNAc) serine glycosylation. Serine 62 and serine 68 each carry phosphoserine. A Phosphotyrosine modification is found at tyrosine 150. At serine 162 the chain carries Phosphoserine. Lysine 204 carries the N6-acetyllysine modification. O-linked (GlcNAc) serine glycosylation is present at serine 209.

The protein belongs to the peptidase T1B family. In terms of assembly, the 26S proteasome consists of a 20S proteasome core and two 19S regulatory subunits. The 20S proteasome core is a barrel-shaped complex made of 28 subunits that are arranged in four stacked rings. The two outer rings are each formed by seven alpha subunits, and the two inner rings are formed by seven beta subunits. The proteolytic activity is exerted by three beta-subunits PSMB5, PSMB6 and PSMB7. Interacts with SERPINB2. Interacts with RFPL4A. As to quaternary structure, (Microbial infection) Interacts with HIV-1 protein Tat.

It is found in the cytoplasm. Its subcellular location is the nucleus. Functionally, non-catalytic component of the 20S core proteasome complex involved in the proteolytic degradation of most intracellular proteins. This complex plays numerous essential roles within the cell by associating with different regulatory particles. Associated with two 19S regulatory particles, forms the 26S proteasome and thus participates in the ATP-dependent degradation of ubiquitinated proteins. The 26S proteasome plays a key role in the maintenance of protein homeostasis by removing misfolded or damaged proteins that could impair cellular functions, and by removing proteins whose functions are no longer required. Associated with the PA200 or PA28, the 20S proteasome mediates ubiquitin-independent protein degradation. This type of proteolysis is required in several pathways including spermatogenesis (20S-PA200 complex) or generation of a subset of MHC class I-presented antigenic peptides (20S-PA28 complex). In Homo sapiens (Human), this protein is Proteasome subunit beta type-1.